The chain runs to 228 residues: Eukaryotic translation initiation factor 6 (228 aa).

It belongs to the eIF-6 family. Monomer. Associates with the 60S ribosomal subunit.

It is found in the cytoplasm. The protein resides in the nucleus. Its subcellular location is the nucleolus. In terms of biological role, binds to the 60S ribosomal subunit and prevents its association with the 40S ribosomal subunit to form the 80S initiation complex in the cytoplasm. May also be involved in ribosome biogenesis. This Guillardia theta (Cryptophyte) protein is Eukaryotic translation initiation factor 6.